A 420-amino-acid chain; its full sequence is MAKFDILEDLKWRGAINQETDEEGLRKYLAEHDDLALYCGTDPTGDSLHIGHLIPFMILKRFQMAGYHPVILIGGGTGAIGDPSGRKTERTLQTAEQVKHNEEKLTAQMKKLFGTENFEIRNNAEWLGKMNLLDFLRDYGKFFQVNNMINKDVVASRLENGISFTEFSYQILQAIDFYHLNKDNGVQMQIGGSDQWGNITAGIDLIHKLDGSDRPAFGLTIPLMLKADGTKFGKSAGGAVWLDPEKTSPYEFYQFWINQDDRDVVKYLKYFTFLSREEIEDLAEKTEKEPWKRAAQKRLAEEVTKFVHGEEGLKEAQIITEALFSGNVKSLSVPQIEQALKNAPSAEATHEAKNIVEFLVETKIEPSKRQAREDVKNGAIYVNGERQDDIDFIIEPDSDFDGKYVIIRKGKRKYTLVKIK.

Tyr-38 is a binding site for L-tyrosine. Residues 43–52 carry the 'HIGH' region motif; sequence PTGDSLHIGH. Tyr-169 and Gln-173 together coordinate L-tyrosine. The 'KMSKS' region motif lies at 231 to 235; it reads KFGKS. ATP is bound at residue Lys-234. The S4 RNA-binding domain maps to 353-419; the sequence is KNIVEFLVET…GKRKYTLVKI (67 aa).

This sequence belongs to the class-I aminoacyl-tRNA synthetase family. TyrS type 1 subfamily. As to quaternary structure, homodimer.

The protein localises to the cytoplasm. The enzyme catalyses tRNA(Tyr) + L-tyrosine + ATP = L-tyrosyl-tRNA(Tyr) + AMP + diphosphate + H(+). Its function is as follows. Catalyzes the attachment of tyrosine to tRNA(Tyr) in a two-step reaction: tyrosine is first activated by ATP to form Tyr-AMP and then transferred to the acceptor end of tRNA(Tyr). The sequence is that of Tyrosine--tRNA ligase from Lactobacillus johnsonii (strain CNCM I-12250 / La1 / NCC 533).